Reading from the N-terminus, the 142-residue chain is MALERTFSIIKPNAVANNNIGAIYARFESAGFNIIAAKMLHLTKEQAEGFYAEHKGRPFFDGLVEFMTSGPIMVQVLEGENAVQRHRDIMGATNPDNALAGTLRADFADSFTANAVHGSDAVESAQREIAYFFAADEIFPRS.

Residues Lys11, Phe59, Arg87, Thr93, Arg104, and Asn114 each coordinate ATP. His117 serves as the catalytic Pros-phosphohistidine intermediate.

Belongs to the NDK family. As to quaternary structure, homotetramer. The cofactor is Mg(2+).

It is found in the cytoplasm. The catalysed reaction is a 2'-deoxyribonucleoside 5'-diphosphate + ATP = a 2'-deoxyribonucleoside 5'-triphosphate + ADP. It carries out the reaction a ribonucleoside 5'-diphosphate + ATP = a ribonucleoside 5'-triphosphate + ADP. Functionally, major role in the synthesis of nucleoside triphosphates other than ATP. The ATP gamma phosphate is transferred to the NDP beta phosphate via a ping-pong mechanism, using a phosphorylated active-site intermediate. The protein is Nucleoside diphosphate kinase of Yersinia pseudotuberculosis serotype O:1b (strain IP 31758).